Consider the following 397-residue polypeptide: Glia-derived nexin (397 aa).

Residues 1–19 (MNWHFPFFILTTVTLYSVH) form the signal peptide. An N-linked (GlcNAc...) asparagine glycan is attached at N159.

It belongs to the serpin family. Most abundant in seminal vesicles.

Its subcellular location is the secreted. The protein resides in the extracellular space. Functionally, serine protease inhibitor with activity toward thrombin, trypsin, and urokinase. Promotes neurite extension by inhibiting thrombin. Binds heparin. In Mus musculus (Mouse), this protein is Glia-derived nexin (Serpine2).